The chain runs to 910 residues: Dimethylsulfide dehydrogenase subunit alpha (910 aa).

Residues 1–28 (MLRTTRRTLMQGASLVGAGLFAAGRGWA) constitute a signal peptide (tat-type signal). A 4Fe-4S Mo/W bis-MGD-type domain is found at 59–123 (DYVGKAAHCI…IHSTSMYEAD (65 aa)). 4 residues coordinate [4Fe-4S] cluster: His66, Cys70, Cys74, and Cys109.

Belongs to the prokaryotic molybdopterin-containing oxidoreductase family. As to quaternary structure, heterotrimer of alpha, beta and gamma subunits. It depends on [4Fe-4S] cluster as a cofactor. Requires Mo-bis(molybdopterin guanine dinucleotide) as cofactor. Post-translationally, predicted to be exported by the Tat system. The position of the signal peptide cleavage has been experimentally proven.

Its subcellular location is the periplasm. It carries out the reaction 2 Fe(III)-[cytochrome c2] + dimethyl sulfide + H2O = 2 Fe(II)-[cytochrome c2] + dimethyl sulfoxide + 2 H(+). In terms of biological role, allows photoautotrophic growth on dimethyl sulfide (DMS) as the sole electron donor. The polypeptide is Dimethylsulfide dehydrogenase subunit alpha (ddhA) (Rhodovulum sulfidophilum (Rhodobacter sulfidophilus)).